A 255-amino-acid polypeptide reads, in one-letter code: Aliphatic sulfonates import ATP-binding protein SsuB (255 aa).

Residues 12–233 enclose the ABC transporter domain; sequence LLLNAVSKHY…RLGSVRLAEL (222 aa). ATP is bound at residue 44-51; it reads GRSGGGKS.

It belongs to the ABC transporter superfamily. Aliphatic sulfonates importer (TC 3.A.1.17.2) family. The complex is composed of two ATP-binding proteins (SsuB), two transmembrane proteins (SsuC) and a solute-binding protein (SsuA).

It localises to the cell inner membrane. It catalyses the reaction ATP + H2O + aliphatic sulfonate-[sulfonate-binding protein]Side 1 = ADP + phosphate + aliphatic sulfonateSide 2 + [sulfonate-binding protein]Side 1.. In terms of biological role, part of the ABC transporter complex SsuABC involved in aliphatic sulfonates import. Responsible for energy coupling to the transport system. The chain is Aliphatic sulfonates import ATP-binding protein SsuB from Escherichia coli O6:K15:H31 (strain 536 / UPEC).